The primary structure comprises 81 residues: Tissue- and phase-specific nuclear protein (81 aa).

As to expression, expressed in oviduct, where expression levels are higher in uterine sections than in tuba sections. No expression detected in small intestine and liver (at protein level).

The protein resides in the nucleus. This Podarcis siculus (Italian wall lizard) protein is Tissue- and phase-specific nuclear protein.